Consider the following 223-residue polypeptide: Probable transaldolase (223 aa).

Lys92 acts as the Schiff-base intermediate with substrate in catalysis.

The protein belongs to the transaldolase family. Type 3B subfamily.

Its subcellular location is the cytoplasm. It carries out the reaction D-sedoheptulose 7-phosphate + D-glyceraldehyde 3-phosphate = D-erythrose 4-phosphate + beta-D-fructose 6-phosphate. The protein operates within carbohydrate degradation; pentose phosphate pathway; D-glyceraldehyde 3-phosphate and beta-D-fructose 6-phosphate from D-ribose 5-phosphate and D-xylulose 5-phosphate (non-oxidative stage): step 2/3. In terms of biological role, transaldolase is important for the balance of metabolites in the pentose-phosphate pathway. This Thermus thermophilus (strain ATCC 27634 / DSM 579 / HB8) protein is Probable transaldolase.